Consider the following 267-residue polypeptide: tRNA pseudouridine synthase A (267 aa).

Asp-54 serves as the catalytic Nucleophile. Tyr-114 provides a ligand contact to substrate.

This sequence belongs to the tRNA pseudouridine synthase TruA family. Homodimer.

The enzyme catalyses uridine(38/39/40) in tRNA = pseudouridine(38/39/40) in tRNA. Functionally, formation of pseudouridine at positions 38, 39 and 40 in the anticodon stem and loop of transfer RNAs. In Tropheryma whipplei (strain TW08/27) (Whipple's bacillus), this protein is tRNA pseudouridine synthase A.